Reading from the N-terminus, the 589-residue chain is Aspartate--tRNA ligase (589 aa).

Glu-172 lines the L-aspartate pocket. The interval 196–199 is aspartate; sequence QLFK. Arg-218 contributes to the L-aspartate binding site. Residues 218 to 220 and Gln-227 contribute to the ATP site; that span reads RDE. His-449 lines the L-aspartate pocket. Position 483 (Glu-483) interacts with ATP. Arg-490 contributes to the L-aspartate binding site. Residue 535–538 coordinates ATP; the sequence is GLDR.

The protein belongs to the class-II aminoacyl-tRNA synthetase family. Type 1 subfamily. Homodimer.

The protein resides in the cytoplasm. The catalysed reaction is tRNA(Asp) + L-aspartate + ATP = L-aspartyl-tRNA(Asp) + AMP + diphosphate. Functionally, catalyzes the attachment of L-aspartate to tRNA(Asp) in a two-step reaction: L-aspartate is first activated by ATP to form Asp-AMP and then transferred to the acceptor end of tRNA(Asp). This Haemophilus ducreyi (strain 35000HP / ATCC 700724) protein is Aspartate--tRNA ligase.